Reading from the N-terminus, the 358-residue chain is Branched-chain amino acid aminotransferase gloG (358 aa).

Residue R91 participates in pyridoxal 5'-phosphate binding. K195 acts as the Proton acceptor in catalysis. K195 carries the N6-(pyridoxal phosphate)lysine modification. A pyridoxal 5'-phosphate-binding site is contributed by E231.

It belongs to the class-IV pyridoxal-phosphate-dependent aminotransferase family. The cofactor is pyridoxal 5'-phosphate.

The catalysed reaction is L-isoleucine + 2-oxoglutarate = (S)-3-methyl-2-oxopentanoate + L-glutamate. It carries out the reaction L-leucine + 2-oxoglutarate = 4-methyl-2-oxopentanoate + L-glutamate. It catalyses the reaction L-valine + 2-oxoglutarate = 3-methyl-2-oxobutanoate + L-glutamate. Its pathway is mycotoxin biosynthesis. Its function is as follows. Branched-chain amino acid aminotransferase; part of the gene cluster that mediates the biosynthesis of pneumocandins, lipohexapeptides of the echinocandin family that prevent fungal cell wall formation by non-competitive inhibition of beta-1,3-glucan synthase. The 10,12-dimethylmyristoyl side chain is synthesized by the reducing polyketide synthase gloL/GLPKS4. The thioesterase gloN/GLHYD exclusively interacts with gloL/GLPKS4 to maintain turnover of the polyketide side chain. The 10R,12S-dimethylmyristic acid is then transferred to the first thiolation domain of the nonribosomal peptide synthetase gloA/GLNRPS4 by the acyl-AMP ligase gloD/GLligase, followed by its acylation to L-ornithine to trigger elongation of the cyclic hexapeptide. L-ornithine, 4R-hydroxyl-L-proline (generated from L-proline by the dioxygenase gloF/GLOXY2), 3S-hydroxyl-L-homotyrosine (generated by gloG/GLHtyB, gloH/GLHtyA, gloI/GLHtyC, gloJ/GLHtyD and hydroxylated at C-3 by the dioxygenase gloM/GLOXY1), 3R-hydroxyl-L-glutamine (generated from L-glutamine probably by the dioxygenase gloE/GLOXY3) and 3S-hydroxyl-L-proline (generated from L-proline by the dioxygenase gloF/GLOXY2 to yield pneumocandin B0), or 3S-hydroxyl-4S-methyl-L-proline (generated from L-leucine by the dioxygenase gloC/GLOXY4 to yield pneumocandin A0) are sequentially added to the growing chain. The last C domain of gloA/GLNRPS4 is proposed to be responsible for cyclization by condensation to form the peptide bond between L-ornithine and 3S-hydroxyl-4S-methyl-L-proline (for pneumocandin A0) or 3S-hydroxyl-L-proline (for pneumocandin B0). Finally, the subsequent C-4 hydroxylation of 3S-hydroxyl-L-homotyrosine and L-ornithine dihydroxylation at C-4 and C-5 are performed by the cytochrome P450 monooxygenases gloP/GLP450-1 and gloO/GLP450-2, respectively. The chain is Branched-chain amino acid aminotransferase gloG from Glarea lozoyensis (strain ATCC 20868 / MF5171).